The following is a 144-amino-acid chain: Protein SprT-like (144 aa).

The SprT-like domain maps to 4–143 (NKYVQEVSLQ…GKCRGKLTLK (140 aa)). H64 is a binding site for Zn(2+). Residue E65 is part of the active site. H68 is a binding site for Zn(2+).

It belongs to the SprT family. Zn(2+) serves as cofactor.

It localises to the cytoplasm. The protein is Protein SprT-like of Streptococcus suis (strain 98HAH33).